The primary structure comprises 119 residues: Class I hydrophobin 2 (119 aa).

The N-terminal stretch at 1-22 (MFARISTIITTLFFAMLAAATA) is a signal peptide. 4 cysteine pairs are disulfide-bonded: cysteine 36–cysteine 97, cysteine 45–cysteine 91, cysteine 46–cysteine 79, and cysteine 98–cysteine 112.

It belongs to the fungal hydrophobin family. Self-assembles to form functional amyloid fibrils called rodlets. Self-assembly into fibrillar rodlets occurs spontaneously at hydrophobic:hydrophilic interfaces and the rodlets further associate laterally to form amphipathic monolayers.

The protein resides in the secreted. It localises to the cell wall. Functionally, aerial growth, conidiation, and dispersal of filamentous fungi in the environment rely upon a capability of their secreting small amphipathic proteins called hydrophobins (HPBs) with low sequence identity. Class I can self-assemble into an outermost layer of rodlet bundles on aerial cell surfaces, conferring cellular hydrophobicity that supports fungal growth, development and dispersal; whereas Class II form highly ordered films at water-air interfaces through intermolecular interactions but contribute nothing to the rodlet structure. Abh2 is a class I hydrophobin involved in the emergence of aerial hyphae and strands. This chain is Class I hydrophobin 2, found in Agaricus bisporus (White button mushroom).